A 468-amino-acid chain; its full sequence is ATP synthase subunit beta (468 aa).

155-162 contacts ATP; it reads GGAGVGKT.

Belongs to the ATPase alpha/beta chains family. In terms of assembly, F-type ATPases have 2 components, CF(1) - the catalytic core - and CF(0) - the membrane proton channel. CF(1) has five subunits: alpha(3), beta(3), gamma(1), delta(1), epsilon(1). CF(0) has three main subunits: a(1), b(2) and c(9-12). The alpha and beta chains form an alternating ring which encloses part of the gamma chain. CF(1) is attached to CF(0) by a central stalk formed by the gamma and epsilon chains, while a peripheral stalk is formed by the delta and b chains.

The protein localises to the cell membrane. It catalyses the reaction ATP + H2O + 4 H(+)(in) = ADP + phosphate + 5 H(+)(out). Produces ATP from ADP in the presence of a proton gradient across the membrane. The catalytic sites are hosted primarily by the beta subunits. This Streptococcus thermophilus (strain ATCC BAA-250 / LMG 18311) protein is ATP synthase subunit beta.